Consider the following 602-residue polypeptide: Aspartate--tRNA(Asp/Asn) ligase (602 aa).

Glu-177 serves as a coordination point for L-aspartate. The interval 201–204 (QLFK) is aspartate. Arg-223 provides a ligand contact to L-aspartate. Residues 223-225 (RDE) and Gln-232 each bind ATP. His-460 contributes to the L-aspartate binding site. Glu-497 provides a ligand contact to ATP. L-aspartate is bound at residue Arg-504. Residue 549-552 (GLDR) coordinates ATP.

This sequence belongs to the class-II aminoacyl-tRNA synthetase family. Type 1 subfamily. In terms of assembly, homodimer.

The protein resides in the cytoplasm. It catalyses the reaction tRNA(Asx) + L-aspartate + ATP = L-aspartyl-tRNA(Asx) + AMP + diphosphate. In terms of biological role, aspartyl-tRNA synthetase with relaxed tRNA specificity since it is able to aspartylate not only its cognate tRNA(Asp) but also tRNA(Asn). Reaction proceeds in two steps: L-aspartate is first activated by ATP to form Asp-AMP and then transferred to the acceptor end of tRNA(Asp/Asn). This is Aspartate--tRNA(Asp/Asn) ligase from Prochlorococcus marinus (strain MIT 9515).